Consider the following 397-residue polypeptide: Acetate kinase (397 aa).

Residue Asn-8 coordinates Mg(2+). Lys-15 lines the ATP pocket. Arg-90 lines the substrate pocket. Asp-147 (proton donor/acceptor) is an active-site residue. An ATP-binding site is contributed by 207–211; the sequence is HLGAG. Glu-382 lines the Mg(2+) pocket.

Belongs to the acetokinase family. As to quaternary structure, homodimer. The cofactor is Mg(2+). Requires Mn(2+) as cofactor.

It localises to the cytoplasm. The catalysed reaction is acetate + ATP = acetyl phosphate + ADP. It participates in metabolic intermediate biosynthesis; acetyl-CoA biosynthesis; acetyl-CoA from acetate: step 1/2. Its function is as follows. Catalyzes the formation of acetyl phosphate from acetate and ATP. Can also catalyze the reverse reaction. This Lactiplantibacillus plantarum (strain ATCC BAA-793 / NCIMB 8826 / WCFS1) (Lactobacillus plantarum) protein is Acetate kinase.